A 317-amino-acid polypeptide reads, in one-letter code: Ciliary microtubule inner protein 2A (317 aa).

Residues 131–153 (TPDTPHPPCPPGRKGDSRDLGHP) are disordered.

It belongs to the CIMIP2 family. As to quaternary structure, microtubule inner protein component of sperm flagellar doublet microtubules.

The protein resides in the cytoplasm. It localises to the cytoskeleton. It is found in the flagellum axoneme. In terms of biological role, microtubule inner protein (MIP) part of the dynein-decorated doublet microtubules (DMTs) in flagellum axoneme. Binds to the intra-tubulin interfaces. The protein is Ciliary microtubule inner protein 2A of Homo sapiens (Human).